A 93-amino-acid chain; its full sequence is Putative septation protein SpoVG (93 aa).

The protein belongs to the SpoVG family.

In terms of biological role, could be involved in septation. The chain is Putative septation protein SpoVG from Fusobacterium nucleatum subsp. nucleatum (strain ATCC 25586 / DSM 15643 / BCRC 10681 / CIP 101130 / JCM 8532 / KCTC 2640 / LMG 13131 / VPI 4355).